The sequence spans 508 residues: Glycerol kinase (508 aa).

Thr14 contacts ADP. ATP-binding residues include Thr14, Thr15, and Ser16. Thr14 is a binding site for sn-glycerol 3-phosphate. Arg18 contacts ADP. Residues Arg84, Glu85, Tyr134, and Asp247 each coordinate sn-glycerol 3-phosphate. Glycerol is bound by residues Arg84, Glu85, Tyr134, Asp247, and Gln248. Positions 269 and 313 each coordinate ADP. Residues Thr269, Gly313, Gln317, and Gly416 each coordinate ATP. An ADP-binding site is contributed by Gly416.

It belongs to the FGGY kinase family.

It carries out the reaction glycerol + ATP = sn-glycerol 3-phosphate + ADP + H(+). It participates in polyol metabolism; glycerol degradation via glycerol kinase pathway; sn-glycerol 3-phosphate from glycerol: step 1/1. Its activity is regulated as follows. Inhibited by fructose 1,6-bisphosphate (FBP). In terms of biological role, key enzyme in the regulation of glycerol uptake and metabolism. Catalyzes the phosphorylation of glycerol to yield sn-glycerol 3-phosphate. The protein is Glycerol kinase of Mycoplasmoides gallisepticum (strain R(low / passage 15 / clone 2)) (Mycoplasma gallisepticum).